Here is a 593-residue protein sequence, read N- to C-terminus: Chromosomal replication initiator protein DnaA (593 aa).

A domain I, interacts with DnaA modulators region spans residues 1-71; that stretch reads MSDPCWEQCV…EIISNSDAGP (71 aa). Residues 71-256 are domain II; sequence PKSLEIAVAQ…DVEGGIQHKH (186 aa). A disordered region spans residues 97–186; it reads AVPVPDPLPS…STESSADRER (90 aa). Residues 113-124 show a composition bias toward polar residues; the sequence is SFQPPKGNTSAD. The domain III, AAA+ region stretch occupies residues 257–473; it reads NLNTTFIFDN…GALKRVIANA (217 aa). ATP-binding residues include glycine 301, glycine 303, lysine 304, and threonine 305. Residues 474 to 593 form a domain IV, binds dsDNA region; it reads QFTQRSISVE…VKNLLRTLTT (120 aa).

It belongs to the DnaA family. Oligomerizes as a right-handed, spiral filament on DNA at oriC.

The protein resides in the cytoplasm. In terms of biological role, plays an essential role in the initiation and regulation of chromosomal replication. ATP-DnaA binds to the origin of replication (oriC) to initiate formation of the DNA replication initiation complex once per cell cycle. Binds the DnaA box (a 9 base pair repeat at the origin) and separates the double-stranded (ds)DNA. Forms a right-handed helical filament on oriC DNA; dsDNA binds to the exterior of the filament while single-stranded (ss)DNA is stabiized in the filament's interior. The ATP-DnaA-oriC complex binds and stabilizes one strand of the AT-rich DNA unwinding element (DUE), permitting loading of DNA polymerase. After initiation quickly degrades to an ADP-DnaA complex that is not apt for DNA replication. Binds acidic phospholipids. The chain is Chromosomal replication initiator protein DnaA from Teredinibacter turnerae (strain ATCC 39867 / T7901).